Consider the following 146-residue polypeptide: Probable acetyltransferase HI_0677 (146 aa).

The region spanning 1–146 (MKLFKAEQWN…ERLFELSLSC (146 aa)) is the N-acetyltransferase domain.

This Haemophilus influenzae (strain ATCC 51907 / DSM 11121 / KW20 / Rd) protein is Probable acetyltransferase HI_0677.